The following is a 599-amino-acid chain: Proline--tRNA ligase (599 aa).

The protein belongs to the class-II aminoacyl-tRNA synthetase family. ProS type 1 subfamily. As to quaternary structure, homodimer.

The protein localises to the cytoplasm. The catalysed reaction is tRNA(Pro) + L-proline + ATP = L-prolyl-tRNA(Pro) + AMP + diphosphate. Its function is as follows. Catalyzes the attachment of proline to tRNA(Pro) in a two-step reaction: proline is first activated by ATP to form Pro-AMP and then transferred to the acceptor end of tRNA(Pro). As ProRS can inadvertently accommodate and process non-cognate amino acids such as alanine and cysteine, to avoid such errors it has two additional distinct editing activities against alanine. One activity is designated as 'pretransfer' editing and involves the tRNA(Pro)-independent hydrolysis of activated Ala-AMP. The other activity is designated 'posttransfer' editing and involves deacylation of mischarged Ala-tRNA(Pro). The misacylated Cys-tRNA(Pro) is not edited by ProRS. This is Proline--tRNA ligase from Prochlorococcus marinus (strain MIT 9313).